A 301-amino-acid chain; its full sequence is Probable alpha-L-glutamate ligase (301 aa).

The region spanning 104–287 (LQLLSRRGIG…VAGMIIEHLE (184 aa)) is the ATP-grasp domain. Residues lysine 141, 178 to 179 (EY), aspartate 187, and 211 to 213 (RSN) contribute to the ATP site. Mg(2+)-binding residues include aspartate 248, glutamate 260, and asparagine 262. 3 residues coordinate Mn(2+): aspartate 248, glutamate 260, and asparagine 262.

This sequence belongs to the RimK family. Requires Mg(2+) as cofactor. The cofactor is Mn(2+).

In Pseudomonas entomophila (strain L48), this protein is Probable alpha-L-glutamate ligase.